Reading from the N-terminus, the 372-residue chain is Pluviatolide O-methyltransferase (372 aa).

S-adenosyl-L-homocysteine contacts are provided by Gly-214, Asp-237, Asp-257, Met-258, and Lys-271. His-275 acts as the Proton acceptor in catalysis. Residues Asp-306 and Glu-338 contribute to the active site.

Belongs to the class I-like SAM-binding methyltransferase superfamily. Cation-independent O-methyltransferase family. COMT subfamily. In terms of assembly, homodimer. As to expression, mostly expressed in stems, and, to a lower extent, in leaves.

It carries out the reaction (-)-pluviatolide + S-adenosyl-L-methionine = (-)-bursehernin + S-adenosyl-L-homocysteine + H(+). Its pathway is aromatic compound metabolism; phenylpropanoid biosynthesis. In terms of biological role, O-methyltransferase involved in the biosynthesis of etoposide, a chemotherapeutic compound of the topoisomerase inhibitor family. Catalyzes the methylation of (-)-pluviatolide to produce (-)-bursehernin. The polypeptide is Pluviatolide O-methyltransferase (Sinopodophyllum hexandrum (Himalayan may apple)).